A 524-amino-acid chain; its full sequence is Beta-glucosidase 21 (524 aa).

An N-terminal signal peptide occupies residues 1-24 (MALQKFPLMGLLLLLTILVSVTTA). Glutamine 55 provides a ligand contact to a beta-D-glucoside. N-linked (GlcNAc...) asparagine glycosylation is present at asparagine 61. A beta-D-glucoside contacts are provided by residues histidine 158 and 203 to 204 (NE). The Proton donor role is filled by glutamate 204. The cysteines at positions 223 and 230 are disulfide-linked. Residues tyrosine 346, glutamate 418, tryptophan 468, 475–476 (EW), and phenylalanine 484 each bind a beta-D-glucoside. The Nucleophile role is filled by glutamate 418. A glycan (N-linked (GlcNAc...) asparagine) is linked at asparagine 494. Residues 521–524 (RDEL) carry the Prevents secretion from ER motif.

Belongs to the glycosyl hydrolase 1 family. Component of the PYK10 complex, at least composed of PYK10/BGLU23, BGLU21, BGLU22, JAL22, JAL23, PBP1/JAL30, PBP2/JAL31, JAL32, JAL33, JAL34, JAL35, GLL22 and GLL23. Expressed exclusively in roots.

The protein localises to the endoplasmic reticulum lumen. The catalysed reaction is Hydrolysis of terminal, non-reducing beta-D-glucosyl residues with release of beta-D-glucose.. Its activity is regulated as follows. Activated upon binding to PBP1 or PBP2. Beta-D-glucosidase active on scopolin &gt;&gt; esculin &gt;&gt; 4-MU-glucoside &gt; DIMBOA-glucoside. No activity with pNP-glucoside, oNP-glucoside and sinigrin as substrates. This is Beta-glucosidase 21 from Arabidopsis thaliana (Mouse-ear cress).